Reading from the N-terminus, the 630-residue chain is Multidrug transporter TPO3 (630 aa).

The span at 1 to 35 shows a compositional bias: polar residues; it reads MVDQESLVSFSSETSQSINSDIDIESQQQPRQYIP. Disordered stretches follow at residues 1 to 46 and 107 to 157; these read MVDQ…KERL and TSTA…NQQP. Residues 37–46 are compositionally biased toward basic and acidic residues; sequence NEKDGNKERL. The span at 125–137 shows a compositional bias: low complexity; that stretch reads RRSQNIAASSNSS. A glycan (N-linked (GlcNAc...) asparagine) is linked at Asn135. 12 consecutive transmembrane segments (helical) span residues 190–210, 222–242, 252–272, 282–302, 312–332, 342–362, 423–443, 453–473, 494–514, 519–539, 553–575, and 587–607; these read ILSC…GGLF, AAIL…LIWS, LAYF…ALSP, FLCG…IADM, IAFF…VNGF, LIFW…AFIP, FYVC…PVVF, LIGL…ATTF, LFGA…LGAT, IIWV…VLIY, YASS…FPLF, and WASW…FGFY.

The protein belongs to the major facilitator superfamily. DHA1 family. Polyamines/proton antiporter (TC 2.A.1.2.16) subfamily.

The protein localises to the cell membrane. Cell membrane polyamine/proton antiporter, involved in the detoxification of excess polyamines in the cytoplasm. Involved in the resistance to the imidazole antifungal drugs tioconazole, miconazole, clotrimazole and ketoconazole; to the triazole fluconazole; but not to the antifungals flucytosine or amphotericin B. Plays a role in spermine homeostasis, but spermine accumulation in response to clotrimazole is independent of TPO3. This Candida glabrata (strain ATCC 2001 / BCRC 20586 / JCM 3761 / NBRC 0622 / NRRL Y-65 / CBS 138) (Yeast) protein is Multidrug transporter TPO3.